A 300-amino-acid chain; its full sequence is Ribosomal RNA small subunit methyltransferase H (300 aa).

S-adenosyl-L-methionine contacts are provided by residues 35-37 (GGH), Asp-55, Phe-82, Asp-100, and Gln-107.

It belongs to the methyltransferase superfamily. RsmH family.

The protein resides in the cytoplasm. The catalysed reaction is cytidine(1402) in 16S rRNA + S-adenosyl-L-methionine = N(4)-methylcytidine(1402) in 16S rRNA + S-adenosyl-L-homocysteine + H(+). In terms of biological role, specifically methylates the N4 position of cytidine in position 1402 (C1402) of 16S rRNA. The chain is Ribosomal RNA small subunit methyltransferase H from Chlamydia trachomatis serovar A (strain ATCC VR-571B / DSM 19440 / HAR-13).